The following is a 138-amino-acid chain: Small ribosomal subunit protein uS11c (138 aa).

The segment at 1–22 (MAKAIPKISSRRNGRIGSRKGA) is disordered. Residues 9 to 22 (SSRRNGRIGSRKGA) show a composition bias toward basic residues.

It belongs to the universal ribosomal protein uS11 family. As to quaternary structure, part of the 30S ribosomal subunit.

It is found in the plastid. Its subcellular location is the chloroplast. The sequence is that of Small ribosomal subunit protein uS11c from Nicotiana tomentosiformis (Tobacco).